Reading from the N-terminus, the 308-residue chain is Pantothenate synthetase (308 aa).

39 to 46 provides a ligand contact to ATP; sequence MGALHDGH. His-46 (proton donor) is an active-site residue. Gln-71 contacts (R)-pantoate. Gln-71 provides a ligand contact to beta-alanine. An ATP-binding site is contributed by 157–160; that stretch reads GEKD. Gln-163 is a (R)-pantoate binding site. Residues Val-186 and 194 to 197 contribute to the ATP site; that span reads MSSR. Residues 286-308 form a disordered region; the sequence is IETPAGTAGPDGDRQYAQSPWRN.

The protein belongs to the pantothenate synthetase family. Homodimer.

It is found in the cytoplasm. It catalyses the reaction (R)-pantoate + beta-alanine + ATP = (R)-pantothenate + AMP + diphosphate + H(+). It functions in the pathway cofactor biosynthesis; (R)-pantothenate biosynthesis; (R)-pantothenate from (R)-pantoate and beta-alanine: step 1/1. Functionally, catalyzes the condensation of pantoate with beta-alanine in an ATP-dependent reaction via a pantoyl-adenylate intermediate. This chain is Pantothenate synthetase, found in Mycolicibacterium paratuberculosis (strain ATCC BAA-968 / K-10) (Mycobacterium paratuberculosis).